The sequence spans 778 residues: Kin of IRRE-like protein 3 (778 aa).

Residues 1–21 (MKPFQLDLLFVCFFLFSQELG) form the signal peptide. Residues 22–535 (LQKRGCCLVL…GLEAESVPMA (514 aa)) are Extracellular-facing. Ig-like C2-type domains are found at residues 48–142 (YSFS…ARLT), 147–243 (PDDP…TSVT), 249–330 (PPLV…RTVD), 335–415 (PRMT…VTLT), and 419–515 (PPII…IRLK). Residues cysteine 69 and cysteine 127 are joined by a disulfide bond. N-linked (GlcNAc...) asparagine glycosylation is present at asparagine 167. Cysteines 170 and 227 form a disulfide. Asparagine 253 carries N-linked (GlcNAc...) asparagine glycosylation. Cysteine 271 and cysteine 314 are oxidised to a cystine. The N-linked (GlcNAc...) asparagine glycan is linked to asparagine 324. Disulfide bonds link cysteine 356-cysteine 398 and cysteine 440-cysteine 499. Asparagine 498 is a glycosylation site (N-linked (GlcNAc...) asparagine). A helical membrane pass occupies residues 536 to 556 (VIIGVAVGAGVAFLVLMATIV). Topologically, residues 557–778 (AFCCARSQRN…PLQRRMQTHV (222 aa)) are cytoplasmic. Polar residues predominate over residues 727–736 (CDSSVSSSGK). Residues 727 to 778 (CDSSVSSSGKQDGYVQFDKASKASASSSHHSQSSSQNSDPSRPLQRRMQTHV) are disordered. Residues 748-762 (KASASSSHHSQSSSQ) show a composition bias toward low complexity.

The protein belongs to the immunoglobulin superfamily. As to quaternary structure, homodimer; mediates homophilic interactions to promote cell adhesion. Interacts with NPHS1; forms heterodimers with NPHS1. Interacts with NPHS2/podocin (via the C-terminus). Interacts with CASK. Interacts (via extracellular region) with MAP1B. Interacts (via extracellular region) with MYO16. Interacts (via intracellular region) with ATP1B1. Interacts (via intracellular region) with SHMT2. Interacts (via intracellular region) with UFC1. Post-translationally, undergoes proteolysis by a metalloprotease and gives rise to a soluble form. In terms of tissue distribution, expressed in fetal and adult brain. Also expressed in kidney, specifically in podocytes of kidney glomeruli. Also expressed in skeletal muscle.

The protein resides in the cell membrane. It is found in the secreted. Its function is as follows. Synaptic adhesion molecule required for the formation of target-specific synapses. Required for formation of target-specific synapses at hippocampal mossy fiber synapses. Required for formation of mossy fiber filopodia, the synaptic structures connecting dentate granule and GABA neurons. Probably acts as a homophilic adhesion molecule that promotes trans-cellular interactions and stabilize mossy fiber filipodia contact and subsequent synapse formation. Required for the coalescence of vomeronasal sensory neuron axons. May be involved in the hematopoietic supportive capacity of stroma cells; the secreted extracellular domain is directly responsible for supporting hematopoietic stem cells. This Homo sapiens (Human) protein is Kin of IRRE-like protein 3.